We begin with the raw amino-acid sequence, 198 residues long: DNA polymerase zeta subunit 2 (198 aa).

Positions 4–196 (EIKADIIVEA…DLGLKMDVLI (193 aa)) constitute an HORMA domain.

This sequence belongs to the MAD2 family. In terms of assembly, accessory subunit of the zeta DNA polymerase complex, which consists of the catalytic component PolZ1/DNApol-zeta and PolZ2/Rev7. Interacts with the apurinic/apyrimidinic (AP) endonuclease Rrp1 (via the N-terminus).

Its function is as follows. As the accessory component of the DNA polymerase zeta complex, involved in translesion DNA synthesis (TLS) and various DNA repair mechanisms. Promotes the apurinic/apyrimidinic (AP) endonuclease activity of Rrp1 and is therefore likely to be involved in the base excision repair (BER) pathway responsible for repair of DNA lesions. It does not appear to influence the synthesis activity of the catalytic component Dmpol-zeta. The chain is DNA polymerase zeta subunit 2 from Drosophila melanogaster (Fruit fly).